A 241-amino-acid polypeptide reads, in one-letter code: uncharacterized protein (241 aa).

Helical transmembrane passes span 7-27 (LIFLLFVIVVSYIFNGLWSVF), 37-57 (LFLLIAFHPQHLDGLIILLLI), 72-92 (IIALVGILLTIIKGVIKSGFG), 110-130 (INLVVFSILLTSVYVLGYVAF), and 138-158 (FGTLYTAFGGLALLGAGIKII).

Its subcellular location is the cell membrane. This is an uncharacterized protein from Methanocaldococcus jannaschii (strain ATCC 43067 / DSM 2661 / JAL-1 / JCM 10045 / NBRC 100440) (Methanococcus jannaschii).